We begin with the raw amino-acid sequence, 298 residues long: Probable D,D-dipeptide transport system permease protein DdpC (298 aa).

Residues 1–33 (MMLSEETSAVRPQKQTRFNGAKLVWMLKGSPLT) are Cytoplasmic-facing. A helical membrane pass occupies residues 34-54 (VTSAVIIVLMLLMMIFSPWLA). Residues 55–96 (THDPNAIDLTARLLPPSAAHWFGTDEVGRDLFSRVLVGSQQS) lie on the Periplasmic side of the membrane. The chain crosses the membrane as a helical span at residues 97-117 (ILAGLVVVAIAGMIGSLLGCL). The ABC transmembrane type-1 domain maps to 97–282 (ILAGLVVVAI…LTAVGFNLFG (186 aa)). At 118–124 (SGVLGGR) the chain is on the cytoplasmic side. Transmembrane regions (helical) follow at residues 125–145 (ADAI…LVLT) and 146–166 (MALA…IAIV). The Cytoplasmic portion of the chain corresponds to 167 to 217 (RIPFYVRLARGQALVVRQYTYVQAAKTFGASRWHLINWHILRNSLPPLIVQ). A helical transmembrane segment spans residues 218 to 238 (ASLDIGSAILMAATLGFIGLG). Over 239-260 (AQQPSAEWGAMVANGRNYVLDQ) the chain is Periplasmic. The helical transmembrane segment at 261 to 281 (WWYCAFPGAAILLTAVGFNLF) threads the bilayer. At 282-298 (GDGIRDLLDPKAGGKQS) the chain is on the cytoplasmic side.

The protein belongs to the binding-protein-dependent transport system permease family. OppBC subfamily. As to quaternary structure, the complex is composed of two ATP-binding proteins (DdpD and DdpF), two transmembrane proteins (DdpB and DdpC) and a solute-binding protein (DdpA).

The protein resides in the cell inner membrane. Its function is as follows. Part of the ABC transporter complex DdpABCDF, which is probably involved in D,D-dipeptide transport. Probably responsible for the translocation of the substrate across the membrane. The sequence is that of Probable D,D-dipeptide transport system permease protein DdpC (ddpC) from Escherichia coli (strain K12).